Reading from the N-terminus, the 542-residue chain is Glutamyl-tRNA(Gln) amidotransferase subunit B, mitochondrial (542 aa).

The transit peptide at 1-66 directs the protein to the mitochondrion; the sequence is MRVFRRFYQV…PNSHTSFFDI (66 aa).

Belongs to the GatB/GatE family. GatB subfamily. As to quaternary structure, subunit of the heterotrimeric GatFAB amidotransferase (AdT) complex, composed of A, B and F subunits.

Its subcellular location is the mitochondrion. The catalysed reaction is L-glutamyl-tRNA(Gln) + L-glutamine + ATP + H2O = L-glutaminyl-tRNA(Gln) + L-glutamate + ADP + phosphate + H(+). Its function is as follows. Allows the formation of correctly charged Gln-tRNA(Gln) through the transamidation of misacylated Glu-tRNA(Gln) in the mitochondria. The reaction takes place in the presence of glutamine and ATP through an activated gamma-phospho-Glu-tRNA(Gln). The chain is Glutamyl-tRNA(Gln) amidotransferase subunit B, mitochondrial from Zygosaccharomyces rouxii (strain ATCC 2623 / CBS 732 / NBRC 1130 / NCYC 568 / NRRL Y-229).